Reading from the N-terminus, the 163-residue chain is Early nodulin-like protein 20 (163 aa).

A signal peptide spans 1–25; it reads MMGKYLWALVYVTVMILIIVVEVES. One can recognise a Phytocyanin domain in the interval 26 to 126; sequence SLHRVGGGRY…GMKLAITVLP (101 aa). Residues Asn42, Asn63, Asn73, Asn88, and Asn135 are each glycosylated (N-linked (GlcNAc...) asparagine). Cys80 and Cys114 are joined by a disulfide. The GPI-anchor amidated serine moiety is linked to residue Ser138. The propeptide at 139–163 is removed in mature form; the sequence is TTTPLIPPNAITAAILIFAFKALLL.

Belongs to the early nodulin-like (ENODL) family.

It is found in the cell membrane. Functionally, may act as a carbohydrate transporter. The chain is Early nodulin-like protein 20 from Arabidopsis thaliana (Mouse-ear cress).